The primary structure comprises 728 residues: Leucine-rich repeat and calponin homology domain-containing protein 1 (728 aa).

Residues 24-36 (HHPHHHHHHHQHH) are compositionally biased toward basic residues. The segment at 24–57 (HHPHHHHHHHQHHGGTGAPGGAGGGGGGSGGFNL) is disordered. Residues 37–54 (GGTGAPGGAGGGGGGSGG) are compositionally biased toward gly residues. LRR repeat units follow at residues 98–119 (DTVQ…LCHF), 121–143 (SLEI…VNLQ), 144–166 (MLTY…CGLP), 167–187 (LKVL…IGQL), 189–210 (QLME…IGQL), 212–234 (SLRE…VDLS), 235–255 (LVKF…FREM), 257–278 (QLQV…ICTK), and 283–304 (IFKY…YLHT). Positions 311-322 (HQHVEDGKKDSD) are enriched in basic and acidic residues. Residues 311-348 (HQHVEDGKKDSDSGVGSDNGDKRLSATEPSDEDTVSLN) form a disordered region. Phosphoserine is present on serine 370. Residues 377–398 (HQEFQPEPSLLGDSTNSGEERD) form a disordered region. At serine 409 the chain carries Phosphoserine. Residues 516-525 (LQSNGSQYSP) show a composition bias toward polar residues. Positions 516 to 547 (LQSNGSQYSPNEIRENSPAVSPTTNSTAPFGL) are disordered. Phosphoserine occurs at positions 532 and 536. The segment covering 533–543 (PAVSPTTNSTA) has biased composition (polar residues). Threonine 568 is subject to Phosphothreonine. One can recognise a Calponin-homology (CH) domain in the interval 576-692 (MREEKELVEQ…TLLALGEKAP (117 aa)).

In terms of assembly, interacts (via LRR repeats) with unphosphorylated DOCK8 (via DHR-2 domain); the interaction prevents the interaction between DOCK8 and CDC42.

It is found in the cytoplasm. Functionally, acts as a negative regulator of GTPase CDC42 by sequestering CDC42-guanine exchange factor DOCK8. Probably by preventing CDC42 activation, negatively regulates CD4(+) T-cell migration. The protein is Leucine-rich repeat and calponin homology domain-containing protein 1 (LRCH1) of Homo sapiens (Human).